The primary structure comprises 334 residues: Ornithine carbamoyltransferase (334 aa).

Carbamoyl phosphate-binding positions include 56-59 (STRT), Gln83, Arg107, and 134-137 (HPTQ). L-ornithine is bound by residues Asn168, Asp232, and 236-237 (SM). Carbamoyl phosphate is bound by residues 274–275 (CL) and Arg320.

The protein belongs to the aspartate/ornithine carbamoyltransferase superfamily. OTCase family.

Its subcellular location is the cytoplasm. It catalyses the reaction carbamoyl phosphate + L-ornithine = L-citrulline + phosphate + H(+). It participates in amino-acid biosynthesis; L-arginine biosynthesis; L-arginine from L-ornithine and carbamoyl phosphate: step 1/3. Functionally, reversibly catalyzes the transfer of the carbamoyl group from carbamoyl phosphate (CP) to the N(epsilon) atom of ornithine (ORN) to produce L-citrulline. The sequence is that of Ornithine carbamoyltransferase from Escherichia coli O157:H7.